We begin with the raw amino-acid sequence, 112 residues long: Cytochrome c3 (112 aa).

Heme c is bound by residues histidine 26, histidine 29, cysteine 34, cysteine 37, histidine 38, histidine 39, cysteine 49, cysteine 54, histidine 55, histidine 73, cysteine 83, cysteine 86, histidine 87, cysteine 104, cysteine 109, and histidine 110.

It depends on heme as a cofactor.

Its function is as follows. Participates in sulfate respiration coupled with phosphorylation by transferring electrons from the enzyme dehydrogenase to ferredoxin. The polypeptide is Cytochrome c3 (Megalodesulfovibrio gigas (strain ATCC 19364 / DSM 1382 / NCIMB 9332 / VKM B-1759) (Desulfovibrio gigas)).